The chain runs to 467 residues: Ammonium transporter Rh type C (467 aa).

At 1-3 (MRL) the chain is on the cytoplasmic side. Residues 4-24 (RLPVVCFLWEIAMIVLFGIFV) form a helical membrane-spanning segment. Topologically, residues 25-55 (RYNDEADPHWSEFMKAQNITSDIQNDYYFRY) are extracellular. A glycan (N-linked (GlcNAc...) asparagine) is linked at N42. Residues 56-76 (PSFQDVHVMIFVGFGFLMTFL) traverse the membrane as a helical segment. Topologically, residues 77-80 (KRYG) are cytoplasmic. The chain crosses the membrane as a helical span at residues 81–101 (FGSVAFNFLLAAFGIQWAILM). Residues 102-119 (QGWFHTFKNGKILIGVES) are Extracellular-facing. The chain crosses the membrane as a helical span at residues 120–139 (LINADFCVGSVCIAFGAILG). Residues 140-145 (KVSPVQ) are Cytoplasmic-facing. The helical transmembrane segment at 146 to 168 (IMVMTLFQVTLFAVNEWILLNLL) threads the bilayer. The Extracellular portion of the chain corresponds to 169–173 (HVNDA). A helical transmembrane segment spans residues 174-194 (GGSMTIHTFGAYFGLTVAWIL). Topologically, residues 195 to 213 (NRPRLKQTNDKEGSVYVSD) are cytoplasmic. A helical membrane pass occupies residues 214-234 (LFSMIGTLFLWMFWPSFNSAV). The Extracellular segment spans residues 235-245 (SYHGDAQHRAA). A helical membrane pass occupies residues 246 to 266 (INTYCSLAACVLTTVAISSVV). Residues 267–271 (NKKGK) lie on the Cytoplasmic side of the membrane. Residues 272–292 (LEMVHIQNATLAGGVAVGTAA) traverse the membrane as a helical segment. Over 293-295 (EMM) the chain is Extracellular. Residues 296–316 (LTPYGSLIVGFICGIVSTLGF) traverse the membrane as a helical segment. The Cytoplasmic segment spans residues 317–337 (TYCSPFLSNKLRLHDTCGIHN). Residues 338 to 358 (LHAMPGLIGGIVGAVTAACAT) form a helical membrane-spanning segment. Over 359–390 (EAVYTADGLKKMFRFEGDYATRTPSMQGGYQA) the chain is Extracellular. A helical membrane pass occupies residues 391-411 (AGLCVSLAFGLVGGTVVGCIL). At 412-467 (KLPIWGDPSDENCFDDEVYWELPEEDEEEHLGAANQYVTHLPENFKLPDRTEVAFK) the chain is on the cytoplasmic side.

It belongs to the ammonium transporter (TC 2.A.49) family. Rh subfamily. Homotrimer.

It is found in the apical cell membrane. Functionally, functions as an ammonia transporter. The sequence is that of Ammonium transporter Rh type C (rhcg) from Xenopus tropicalis (Western clawed frog).